A 247-amino-acid chain; its full sequence is Pulmonary surfactant-associated protein A (247 aa).

The N-terminal stretch at M1–A15 is a signal peptide. Positions G27–P99 constitute a Collagen-like domain. 4-hydroxyproline is present on residues P29, P32, P35, P41, P53, P56, P62, P66, and P69. Positions G30–A100 are disordered. Positions P41–K50 are enriched in basic and acidic residues. The span at P53–G64 shows a compositional bias: pro residues. Residues E83–E92 are compositionally biased toward basic and acidic residues. One can recognise a C-type lectin domain in the interval A132–F247. Disulfide bonds link C154-C245 and C223-C237. Residue N206 is glycosylated (N-linked (GlcNAc...) asparagine). E214, R216, N233, and D234 together coordinate Ca(2+).

Belongs to the SFTPA family. Oligomeric complex of 6 set of homotrimers.

It is found in the secreted. The protein resides in the extracellular space. Its subcellular location is the extracellular matrix. It localises to the surface film. In terms of biological role, in presence of calcium ions, it binds to surfactant phospholipids and contributes to lower the surface tension at the air-liquid interface in the alveoli of the mammalian lung and is essential for normal respiration. Enhances the expression of MYO18A/SP-R210 on alveolar macrophages. This Oryctolagus cuniculus (Rabbit) protein is Pulmonary surfactant-associated protein A (SFTPA1).